We begin with the raw amino-acid sequence, 245 residues long: Adenosylcobinamide-GDP ribazoletransferase (245 aa).

5 helical membrane-spanning segments follow: residues 31 to 51, 61 to 81, 113 to 133, 138 to 158, and 192 to 212; these read FGRAVLCYPLVGVLIGVVLYG, PLLQAALLLSLWVALSGALHL, AAVVALVLVLLLKFGALAALL, PGLLLLAPWLARSSLPLLFLT, and LAFGLSGLLALLVTLMLFAWL.

The protein belongs to the CobS family. The cofactor is Mg(2+).

It is found in the cell inner membrane. The catalysed reaction is alpha-ribazole + adenosylcob(III)inamide-GDP = adenosylcob(III)alamin + GMP + H(+). The enzyme catalyses alpha-ribazole 5'-phosphate + adenosylcob(III)inamide-GDP = adenosylcob(III)alamin 5'-phosphate + GMP + H(+). Its pathway is cofactor biosynthesis; adenosylcobalamin biosynthesis; adenosylcobalamin from cob(II)yrinate a,c-diamide: step 7/7. Joins adenosylcobinamide-GDP and alpha-ribazole to generate adenosylcobalamin (Ado-cobalamin). Also synthesizes adenosylcobalamin 5'-phosphate from adenosylcobinamide-GDP and alpha-ribazole 5'-phosphate. This chain is Adenosylcobinamide-GDP ribazoletransferase, found in Pseudomonas paraeruginosa (strain DSM 24068 / PA7) (Pseudomonas aeruginosa (strain PA7)).